Consider the following 377-residue polypeptide: MSNSIVIIGSGFAARQLVKNIRKQDASIPLTLIAADSMDEYNKPDLSHVISQGQRADDLTRQTAGEFAEQFNLRLFPHTWVTDIDAEAHVVKSQNNQWQYDKLVLATGASAFVPPVPGRELMLTLNSQQEYRACETQLRDARRVLIVGGGLIGIELAMDFCRAGKAVTLIDNAASILASLMLPEVSSRLQHRLTEMGVHLLLKSQLQGLEKTDSGILATLDRQRSIEVDAVIAATGLRPETALARRAGLTINRGVCVDSYLQTSNADIYALGDCAEINGQVLPFLQPIQLSAMVLAKNLLGNNTPLKLPAMLVKIKTPELPLHLAGETQRQDLRWQINTERQGMVARGVDDGDQLRAFVVSEDRMKEAFGLLKTLPM.

This sequence belongs to the FAD-dependent oxidoreductase family. FAD serves as cofactor.

The protein localises to the cytoplasm. The enzyme catalyses 2 reduced [nitric oxide reductase rubredoxin domain] + NAD(+) + H(+) = 2 oxidized [nitric oxide reductase rubredoxin domain] + NADH. The protein operates within nitrogen metabolism; nitric oxide reduction. In terms of biological role, one of at least two accessory proteins for anaerobic nitric oxide (NO) reductase. Reduces the rubredoxin moiety of NO reductase. The chain is Nitric oxide reductase FlRd-NAD(+) reductase from Escherichia coli O7:K1 (strain IAI39 / ExPEC).